The sequence spans 1685 residues: PHD and RING finger domain-containing protein 1 (1685 aa).

The segment at 1 to 82 (MDDDNLDELV…GSEDSEDGIE (82 aa)) is disordered. The segment covering 41–81 (DSEDDTGSEQDDDTDGEETEGLSEEEDPEDRSGSEDSEDGI) has biased composition (acidic residues). The RING-type; degenerate zinc finger occupies 109–150 (CPICLNAFRDQAVGTPETCAHYFCLDCIIEWSRNANSCPVDR). The segment at 188 to 238 (PTFCEVCGRSDREDRLLLCDGCDAGYHMECLDPPLQEVPVDEWFCPECAVP) adopts a PHD-type zinc-finger fold. 5 disordered regions span residues 333-390 (PLTP…KLKN), 449-483 (DSNGEQSADPPSPLSAKRRVLSRSALQSHQPVARP), 537-590 (SAKR…GLSC), 606-777 (TPVR…GSSF), and 809-860 (KVQR…LLPS). A Phosphothreonine modification is found at threonine 335. Basic residues-rich tracts occupy residues 339 to 364 (PAKRKRKAGRRKKVLGRKKTRSRSSV) and 372 to 387 (RAKKRQHRVRRTKGRK). Phosphoserine is present on residues serine 450 and serine 460. Composition is skewed to polar residues over residues 606–625 (TPVRSDSSVTPRSGLSGNLS) and 637–662 (SPRLNGSNVRVGSASTKTMTHSNFPS). Over residues 671–682 (QKTDPRRPDFSK) the composition is skewed to basic and acidic residues. Polar residues-rich tracts occupy residues 694–709 (SNSTQDQAPASGQTVE) and 737–751 (SSRGPQETGSHTSGS). 9 positions are modified to phosphoserine: serine 817, serine 848, serine 849, serine 867, serine 870, serine 922, serine 948, serine 984, and serine 1002. Positions 835–860 (PFDPTGSDSSPPSSSPESLGSGLLPS) are enriched in low complexity. 3 disordered regions span residues 892-1229 (GTEM…VSEV), 1290-1355 (QLDD…APSD), and 1369-1390 (TTLSTPGVLPMGKDSPLLSGRG). Over residues 922-934 (SDLEQEGLGEIEP) the composition is skewed to acidic residues. The segment covering 1001 to 1010 (SSRSRSTSSS) has biased composition (low complexity). 2 stretches are compositionally biased toward basic residues: residues 1011–1031 (RSRKKTKKKKKVAREHQRTRS) and 1054–1064 (KRHRAKTKSRR). Positions 1065–1075 (SSSDRASSQDR) are enriched in basic and acidic residues. Composition is skewed to basic residues over residues 1089–1102 (GPWGHGRCWRKSRS) and 1117–1129 (SRRRKRRHSGSRS). 2 stretches are compositionally biased toward basic and acidic residues: residues 1130–1143 (RGRDGSPHSSLERD) and 1151–1165 (RSRERMDKKESMTRS). Phosphoserine occurs at positions 1135 and 1139. A compositionally biased stretch (basic residues) spans 1181 to 1191 (RTRRPHSREKH). Over residues 1192-1201 (PHSPEKKGAV) the composition is skewed to basic and acidic residues. Serine 1205 is subject to Phosphoserine. Residues 1292–1305 (DDMSSPPSPESTDS) show a composition bias toward low complexity. 2 positions are modified to phosphoserine: serine 1372 and serine 1383. A Phosphothreonine modification is found at threonine 1416. 3 disordered regions span residues 1421 to 1448 (EAEASTPALDRDPRTPLQRPQRPQEGDW), 1466 to 1501 (LPPPIHVLQESGLPDADPSQPPGVPRAEGPPAVGTL), and 1569 to 1591 (LAVPTTNNSEERTATPKTAAEKT). Positions 1577-1591 (SEERTATPKTAAEKT) are enriched in basic and acidic residues. A coiled-coil region spans residues 1589–1615 (EKTKKEEYMKKLHMQERAVEEVKLAIK).

As to quaternary structure, interacts with POLR2A (via the C-terminal domain).

This chain is PHD and RING finger domain-containing protein 1, found in Rattus norvegicus (Rat).